The sequence spans 268 residues: Inositol polyphosphate multikinase (268 aa).

ATP is bound by residues K27, 86–88, and D99; that span reads ENI. Residue 127-135 participates in substrate binding; the sequence is TSGSLGFRI. Position 235 (D235) interacts with ATP.

The protein belongs to the inositol phosphokinase (IPK) family.

The protein resides in the cytoplasm. It is found in the nucleus. It catalyses the reaction 1D-myo-inositol 1,4,5-trisphosphate + 2 ATP = 1D-myo-inositol 1,3,4,5,6-pentakisphosphate + 2 ADP + 2 H(+). The catalysed reaction is 1D-myo-inositol 1,4,5-trisphosphate + ATP = 1D-myo-inositol 1,4,5,6-tetrakisphosphate + ADP + H(+). The enzyme catalyses 1D-myo-inositol 1,4,5-trisphosphate + ATP = 1D-myo-inositol 1,3,4,5-tetrakisphosphate + ADP + H(+). It carries out the reaction 1D-myo-inositol 1,4,5,6-tetrakisphosphate + ATP = 1D-myo-inositol 1,3,4,5,6-pentakisphosphate + ADP + H(+). Inositol phosphate kinase with both monophosphoinositol and diphosphoinositol polyphosphate synthase activities. Able to phosphorylate inositol 1,4,5-trisphosphate (Ins(1,4,5)P3) on both the carbon-3 and carbon-6 positions to synthesize inositol 1,3,4,5-tetrakisphosphate (Ins(1,3,4,5)P4) and inositol 1,4,5,6-tetrakisphosphate (Ins(1,4,5,6)P4), and then to subsequently phosphorylate and convert either isomer of InsP4 to inositol 1,3,4,5,6-pentakisphosphate (Ins(1,3,4,5,6)P5). Also converts (Ins(1,3,4,5,6)P5) to InsP6. Also has a role in transcription regulation. The catalytic activity is required for PHO gene repression by phosphate and for NCR gene activation in response to nitrogen availability, indicating a role for inositol pyrophosphates in these controls. Inositol polyphosphates may be involved in the regulation of chromatin remodeling of transcription. The protein is Inositol polyphosphate multikinase (arg82) of Schizosaccharomyces pombe (strain 972 / ATCC 24843) (Fission yeast).